The following is a 148-amino-acid chain: UPF0756 membrane protein YeaL (148 aa).

4 consecutive transmembrane segments (helical) span residues 14–34, 51–71, 86–106, and 121–141; these read ALGFISHNTTVAVSILVLIIV, LSIGIIILTIGVMAPIASGTL, LVAIAVGVIVSWLGGRGVTLM, and VLGVALFRGVPVGPLIAAGLV.

It belongs to the UPF0756 family.

The protein localises to the cell membrane. This Shigella boydii serotype 18 (strain CDC 3083-94 / BS512) protein is UPF0756 membrane protein YeaL.